We begin with the raw amino-acid sequence, 37 residues long: M-oxotoxin-Ot2b (37 aa).

As to expression, expressed by the venom gland.

It localises to the secreted. Disrupts biological membranes, particularly those rich in phosphocholine. Has antimicrobial activity against Gram-negative bacterium E.coli, Gram-positive bacteria B.subtilis and S.aureus, and hemolytic activity against sheep, pig and guinea pig red blood cells. Has insecticidal activity against S.frugiperda ovarian cells by opening non-selective ion channels. Enhances the insecticidal activity of spider venom neurotoxic peptides. The polypeptide is M-oxotoxin-Ot2b (Oxyopes takobius (Lynx spider)).